The primary structure comprises 73 residues: Toxin Td10 (73 aa).

An N-terminal signal peptide occupies residues 1-7 (IGMVVEC). An LCN-type CS-alpha/beta domain is found at 8 to 70 (KDGYLMGPDG…VWERATNRCG (63 aa)). Cystine bridges form between Cys-18–Cys-69, Cys-22–Cys-44, Cys-30–Cys-50, and Cys-34–Cys-52. At Lys-71 the chain carries Lysine amide.

This sequence belongs to the long (4 C-C) scorpion toxin superfamily. Sodium channel inhibitor family. Beta subfamily. As to expression, expressed by the venom gland.

The protein localises to the secreted. In terms of biological role, beta toxins bind voltage-independently at site-4 of sodium channels (Nav) and shift the voltage of activation toward more negative potentials thereby affecting sodium channel activation and promoting spontaneous and repetitive firing. The sequence is that of Toxin Td10 from Tityus discrepans (Venezuelan scorpion).